A 359-amino-acid polypeptide reads, in one-letter code: Protein mab-21-like 2 (359 aa).

This sequence belongs to the mab-21 family.

The protein resides in the nucleus. It is found in the cytoplasm. Functionally, required for eye morphogenesis. May promote the survival of proliferating retinal progenitor cells. This Danio rerio (Zebrafish) protein is Protein mab-21-like 2 (mab21l2).